The chain runs to 333 residues: Late embryogenesis abundant protein 1 (333 aa).

Disordered regions lie at residues 1–20 (MASRQDRREARAEADARRAA) and 116–246 (KDYT…GQGQ). Positions 3–52 (SRQDRREARAEADARRAAEEIARARDERVMQAEVDARSAADEIARARADR) form a coiled coil. 3 stretches are compositionally biased toward basic and acidic residues: residues 116–163 (KDYT…KDAV), 172–219 (EATK…DATK), and 227–241 (DKARETAATHDDATD).

The protein belongs to the LEA type 4 family.

In Oryza sativa subsp. indica (Rice), this protein is Late embryogenesis abundant protein 1 (LEA1).